A 619-amino-acid polypeptide reads, in one-letter code: CLPTM1-like membrane protein cnrB (619 aa).

The segment at 1–21 (MNNQGGAVAANGQRPQAQQQQ) is disordered. Residues 9 to 21 (AANGQRPQAQQQQ) are compositionally biased toward low complexity. 6 consecutive transmembrane segments (helical) span residues 26-46 (IMGI…ASFA), 324-344 (WILG…FLAF), 360-380 (LSVK…LYLL), 384-404 (TSYM…WKLG), 445-465 (YLSW…LYYH), and 474-496 (VVSS…QLFI). The disordered stretch occupies residues 566-619 (SEEAEEVQQQDKKEIKEKVEEREEEKQEEEEEEKEKEEESTSSSKVTKRKTKKV). Over residues 574-590 (QQDKKEIKEKVEEREEE) the composition is skewed to basic and acidic residues. A compositionally biased stretch (acidic residues) spans 591–605 (KQEEEEEEKEKEEES).

The protein belongs to the CLPTM1 family.

It is found in the membrane. This chain is CLPTM1-like membrane protein cnrB (cnrB), found in Dictyostelium discoideum (Social amoeba).